Here is a 2350-residue protein sequence, read N- to C-terminus: Probable JmjC domain-containing histone demethylation protein 2C (2350 aa).

2 disordered regions span residues 96-302 and 314-336; these read TRAQ…LQEC and PKDR…NDTH. Residues 98–127 show a composition bias toward polar residues; it reads AQANSPRPAMNSQAAVPKQNTHQQQQQRSI. Phosphoserine occurs at positions 135 and 138. Over residues 141–160 the composition is skewed to basic and acidic residues; that stretch reads DEEKMKEDKYDCVSRGENPK. Positions 161–171 are enriched in basic residues; sequence GKNKHVVTKRR. Residues 172 to 189 are compositionally biased toward basic and acidic residues; the sequence is KPEEAEKRLSMKRLRTDN. Over residues 190–200 the composition is skewed to low complexity; it reads ASDASESSDAE. A phosphoserine mark is found at S191 and S194. A compositionally biased stretch (basic and acidic residues) spans 257 to 280; sequence QEDKNHNEGEKPKSTDSHLQDKMT. The span at 281–302 shows a compositional bias: polar residues; sequence LRSSEQATVADHNSNDSVLQEC. Phosphoserine is present on residues S294 and S320. A Phosphothreonine modification is found at T324. Residues S420, S436, S457, S458, S460, S471, and S762 each carry the phosphoserine modification. 5 disordered regions span residues 426 to 486, 747 to 766, 859 to 883, 1030 to 1083, and 1422 to 1508; these read SVTE…NSQA, SSAE…PPLT, RENY…DKDV, RKES…DQSL, and EKVS…VPRS. Composition is skewed to low complexity over residues 863-874 and 1034-1045; these read SRVVPSSSSPKS and SYSSLSPPTLTP. A compositionally biased stretch (polar residues) spans 1071 to 1083; sequence SQSNFKNSSDQSL. Over residues 1454–1463 the composition is skewed to basic residues; that stretch reads KRQPKPTYKK. Residues 1464-1480 are compositionally biased toward basic and acidic residues; sequence KQNDLQKRKGEVEEDSK. The C6-type zinc finger occupies 1657-1682; the sequence is CDACEATLFNVHWVCRKCGFVACLDC. Residues 1776 to 1818 are compositionally biased toward polar residues; sequence KTSVSLPESQQQNSPQKSQTNGNSSPGSASTDSRLTPPESQSP. Positions 1776–1874 are disordered; it reads KTSVSLPESQ…PASQSNEQGS (99 aa). A Phosphoserine modification is found at S1800. A compositionally biased stretch (basic and acidic residues) spans 1826 to 1849; that stretch reads AEQKSREEKQENKEFTLEREIKED. The span at 1855 to 1874 shows a compositional bias: polar residues; sequence SDSPNGSTSPPASQSNEQGS. An LXXLL motif motif is present at residues 1876–1880; it reads LRDLL. The interval 1933–1962 is disordered; that stretch reads PNKTSKINIKSEPNEEPKESSLPATDESNK. A Glycyl lysine isopeptide (Lys-Gly) (interchain with G-Cter in SUMO2) cross-link involves residue K1942. One can recognise a JmjC domain in the interval 2084-2308; sequence MPTRYEDFLR…QSFHLTQELR (225 aa). The Fe cation site is built by H2146, E2148, and H2276.

Belongs to the JHDM2 histone demethylase family. It depends on Fe(2+) as a cofactor.

It localises to the nucleus. Probable histone demethylase that specifically demethylates 'Lys-9' of histone H3, thereby playing a central role in histone code. Demethylation of Lys residue generates formaldehyde and succinate. May be involved in hormone-dependent transcriptional activation, by participating in recruitment to androgen-receptor target genes. The polypeptide is Probable JmjC domain-containing histone demethylation protein 2C (Jmjd1c) (Mus musculus (Mouse)).